Reading from the N-terminus, the 151-residue chain is Protein SprT-like (151 aa).

The SprT-like domain maps to 6–147 (LQRMVENLSE…GHCNGKLRMK (142 aa)). Histidine 67 lines the Zn(2+) pocket. The active site involves glutamate 68. Histidine 71 provides a ligand contact to Zn(2+).

It belongs to the SprT family. Zn(2+) is required as a cofactor.

Its subcellular location is the cytoplasm. The protein is Protein SprT-like of Staphylococcus aureus (strain MRSA252).